We begin with the raw amino-acid sequence, 418 residues long: tRNA(Met) cytidine acetate ligase (418 aa).

Positions 95, 161, and 186 each coordinate ATP.

Belongs to the TmcAL family.

Its subcellular location is the cytoplasm. The enzyme catalyses cytidine(34) in elongator tRNA(Met) + acetate + ATP = N(4)-acetylcytidine(34) in elongator tRNA(Met) + AMP + diphosphate. Its function is as follows. Catalyzes the formation of N(4)-acetylcytidine (ac(4)C) at the wobble position of elongator tRNA(Met), using acetate and ATP as substrates. First activates an acetate ion to form acetyladenylate (Ac-AMP) and then transfers the acetyl group to tRNA to form ac(4)C34. The protein is tRNA(Met) cytidine acetate ligase of Thermotoga petrophila (strain ATCC BAA-488 / DSM 13995 / JCM 10881 / RKU-1).